The following is a 162-amino-acid chain: UPF0114 protein SO_3997 (162 aa).

3 helical membrane passes run 10-32 (YASR…GLGI), 53-75 (LVLV…MVMF), and 136-156 (IMWY…MGYL).

Belongs to the UPF0114 family.

It localises to the cell membrane. This chain is UPF0114 protein SO_3997, found in Shewanella oneidensis (strain ATCC 700550 / JCM 31522 / CIP 106686 / LMG 19005 / NCIMB 14063 / MR-1).